The following is a 37-amino-acid chain: Large ribosomal subunit protein bL36 (37 aa).

This sequence belongs to the bacterial ribosomal protein bL36 family.

This chain is Large ribosomal subunit protein bL36, found in Shewanella frigidimarina (strain NCIMB 400).